The following is a 334-amino-acid chain: Protein-methionine-sulfoxide reductase catalytic subunit MsrP (334 aa).

A signal peptide (tat-type signal) is located at residues 1-44; the sequence is MKKIRPLTEADVTAESAFFMQRRQVLKALGISAAALSLPSTAQA. Residues asparagine 88, 91–92, cysteine 146, threonine 181, asparagine 233, arginine 238, and 249–251 each bind Mo-molybdopterin; these read YE and GIK.

The protein belongs to the MsrP family. As to quaternary structure, heterodimer of a catalytic subunit (MsrP) and a heme-binding subunit (MsrQ). Mo-molybdopterin serves as cofactor. In terms of processing, predicted to be exported by the Tat system. The position of the signal peptide cleavage has not been experimentally proven.

Its subcellular location is the periplasm. It catalyses the reaction L-methionyl-[protein] + a quinone + H2O = L-methionyl-(S)-S-oxide-[protein] + a quinol. It carries out the reaction L-methionyl-[protein] + a quinone + H2O = L-methionyl-(R)-S-oxide-[protein] + a quinol. In terms of biological role, part of the MsrPQ system that repairs oxidized periplasmic proteins containing methionine sulfoxide residues (Met-O), using respiratory chain electrons. Thus protects these proteins from oxidative-stress damage caused by reactive species of oxygen and chlorine generated by the host defense mechanisms. MsrPQ is essential for the maintenance of envelope integrity under bleach stress, rescuing a wide series of structurally unrelated periplasmic proteins from methionine oxidation, including the primary periplasmic chaperone SurA and the lipoprotein Pal. The catalytic subunit MsrP is non-stereospecific, being able to reduce both (R-) and (S-) diastereoisomers of methionine sulfoxide. In Salmonella agona (strain SL483), this protein is Protein-methionine-sulfoxide reductase catalytic subunit MsrP.